The sequence spans 418 residues: Thyroxine-binding globulin (418 aa).

The first 20 residues, 1-20, serve as a signal peptide directing secretion; that stretch reads MSVFFYLFVLVFGLQATIHC. 6 N-linked (GlcNAc...) asparagine glycosylation sites follow: N24, N39, N102, N168, N227, and N256. The thyroxine site is built by N296 and K401.

This sequence belongs to the serpin family.

It localises to the secreted. In terms of biological role, major thyroid hormone transport protein in serum. This is Thyroxine-binding globulin (Serpina7) from Mus musculus (Mouse).